The sequence spans 448 residues: Probable ribonuclease FAU-1 (448 aa).

Residues 426–448 (EAPGGKICTSEGLTSALPQSSSA) form a disordered region. A compositionally biased stretch (polar residues) spans 436–448 (EGLTSALPQSSSA).

The protein belongs to the FAU-1 family.

Probable RNase involved in rRNA stability through maturation and/or degradation of precursor rRNAs. Binds to RNA in loop regions with AU-rich sequences. This chain is Probable ribonuclease FAU-1, found in Pyrobaculum islandicum (strain DSM 4184 / JCM 9189 / GEO3).